A 37-amino-acid polypeptide reads, in one-letter code: MKVKPSVKRICNKCRVIRRHGRVMVICADPRHKQRQG.

This sequence belongs to the bacterial ribosomal protein bL36 family.

The sequence is that of Large ribosomal subunit protein bL36 from Salinispora tropica (strain ATCC BAA-916 / DSM 44818 / JCM 13857 / NBRC 105044 / CNB-440).